The sequence spans 388 residues: MSWWWAGAIGAAKKKLDEDEPSQSFESVALIIGVTGIVGNSLAEILPLSDTPGGPWKVYGVARRPRPTWNADHPIDYIQCDVSDAEDTRSKLSPLTDVTHVFYVTWTNRESESENCEANGSMLRNVLQAIIPYAPNLRHVCLQTGTKHYLGPFTNVDGPRHDPPFTEDMPRLQIQNFYYTQEDILFEEIKKIETVTWSIHRPNMIFGFSPYSLMNIVGTLCVYAAICKHEGSPLLFPGSKKAWEGFMTASDADLIAEQQIWAAVDPYAKNEAFNCNNADIFKWKHLWKILAEQFGIEEYGFEEGKNLGLVEMMKGKERVWEEMVKENQLQEKKLEEVGVWWFADVILGVEGMIDSMNKSKEYGFLGFRNSNNSFISWIDKYKAFKIVP.

Ser2 bears the N-acetylserine mark. NADP(+) is bound by residues 35–37, 63–64, 81–82, Thr105, and Gln143; these read TGI, RR, and DV. Active-site residues include Lys147 and Tyr178. NADP(+)-binding positions include Tyr178, Ile205, and 212–214; that span reads SLM.

It belongs to the short-chain dehydrogenases/reductases (SDR) family. Highly divergent. As to quaternary structure, homodimer. As to expression, expressed in roots, stems, leaves, flowers, seeds and siliques. Expressed in the vascular bundles.

The enzyme catalyses 5beta-cholestan-3-one + NADP(+) = cholest-4-en-3-one + NADPH + H(+). It carries out the reaction 4,5beta-dihydrocortisone + NADP(+) = cortisone + NADPH + H(+). Its function is as follows. Involved in vascular strand development. Catalyzes the stereospecific conversion of progesterone to 5-beta-pregnane-3,20-dione. Can use progesterone, testosterone, 21-acetyl cortexone, 2-cyclohexenone, but-1-en-3-one, ethyl acrylate, ethylmethacrylate, cortisone and canarigenone as substrates, lower activity with 3-methyl-2-cyclohexenone and 3,5,5-trimethyl-2-cyclohexenone as substrate, and no activity with canarigenin, canarigenin digitoxoside and pregnenolone. May be involved in the formation of 5-beta phytoecdysteroids. This is 3-oxo-Delta(4,5)-steroid 5-beta-reductase (VEP1) from Arabidopsis thaliana (Mouse-ear cress).